A 423-amino-acid chain; its full sequence is Serine--tRNA ligase (423 aa).

231–233 serves as a coordination point for L-serine; that stretch reads TAE. 262-264 contacts ATP; it reads RSE. Glu-285 contacts L-serine. Residue 349-352 coordinates ATP; it reads EISS. Ser-384 provides a ligand contact to L-serine.

The protein belongs to the class-II aminoacyl-tRNA synthetase family. Type-1 seryl-tRNA synthetase subfamily. Homodimer. The tRNA molecule binds across the dimer.

The protein resides in the cytoplasm. It carries out the reaction tRNA(Ser) + L-serine + ATP = L-seryl-tRNA(Ser) + AMP + diphosphate + H(+). It catalyses the reaction tRNA(Sec) + L-serine + ATP = L-seryl-tRNA(Sec) + AMP + diphosphate + H(+). It participates in aminoacyl-tRNA biosynthesis; selenocysteinyl-tRNA(Sec) biosynthesis; L-seryl-tRNA(Sec) from L-serine and tRNA(Sec): step 1/1. Catalyzes the attachment of serine to tRNA(Ser). Is also able to aminoacylate tRNA(Sec) with serine, to form the misacylated tRNA L-seryl-tRNA(Sec), which will be further converted into selenocysteinyl-tRNA(Sec). This Lactococcus lactis subsp. cremoris (strain SK11) protein is Serine--tRNA ligase.